The chain runs to 372 residues: GDSL esterase/lipase At1g54020 (372 aa).

The N-terminal stretch at 1–26 (MECSSVSVLGILLVFPLLHNLVTISG) is a signal peptide. Ser40 (nucleophile) is an active-site residue. Residues Asn161 and Asn280 are each glycosylated (N-linked (GlcNAc...) asparagine). Catalysis depends on residues Asp314 and His317.

Belongs to the 'GDSL' lipolytic enzyme family.

It is found in the secreted. The polypeptide is GDSL esterase/lipase At1g54020 (Arabidopsis thaliana (Mouse-ear cress)).